A 350-amino-acid chain; its full sequence is DNA-directed RNA polymerase subunit alpha (350 aa).

The interval 1–226 is alpha N-terminal domain (alpha-NTD); that stretch reads MLISQRPTLS…ELFGLARELN (226 aa). The interval 241 to 350 is alpha C-terminal domain (alpha-CTD); sequence ADQAAHFALP…NQDYAETEQL (110 aa). The segment at 328 to 350 is disordered; it reads GTWNSDAGYDLEDNQDYAETEQL. Over residues 336–350 the composition is skewed to acidic residues; the sequence is YDLEDNQDYAETEQL.

Belongs to the RNA polymerase alpha chain family. As to quaternary structure, homodimer. The RNAP catalytic core consists of 2 alpha, 1 beta, 1 beta' and 1 omega subunit. When a sigma factor is associated with the core the holoenzyme is formed, which can initiate transcription.

It catalyses the reaction RNA(n) + a ribonucleoside 5'-triphosphate = RNA(n+1) + diphosphate. Functionally, DNA-dependent RNA polymerase catalyzes the transcription of DNA into RNA using the four ribonucleoside triphosphates as substrates. This chain is DNA-directed RNA polymerase subunit alpha, found in Mycolicibacterium vanbaalenii (strain DSM 7251 / JCM 13017 / BCRC 16820 / KCTC 9966 / NRRL B-24157 / PYR-1) (Mycobacterium vanbaalenii).